A 275-amino-acid chain; its full sequence is Diaminopimelate epimerase (275 aa).

Residues Asn-13, Gln-46, and Asn-66 each coordinate substrate. The active-site Proton donor is Cys-75. Substrate-binding positions include 76 to 77 (GN), Asn-159, Asn-192, and 210 to 211 (ER). The active-site Proton acceptor is the Cys-219. Residue 220–221 (GT) participates in substrate binding.

It belongs to the diaminopimelate epimerase family. In terms of assembly, homodimer.

It is found in the cytoplasm. It carries out the reaction (2S,6S)-2,6-diaminopimelate = meso-2,6-diaminopimelate. It functions in the pathway amino-acid biosynthesis; L-lysine biosynthesis via DAP pathway; DL-2,6-diaminopimelate from LL-2,6-diaminopimelate: step 1/1. Functionally, catalyzes the stereoinversion of LL-2,6-diaminopimelate (L,L-DAP) to meso-diaminopimelate (meso-DAP), a precursor of L-lysine and an essential component of the bacterial peptidoglycan. The chain is Diaminopimelate epimerase from Psychromonas ingrahamii (strain DSM 17664 / CCUG 51855 / 37).